The following is a 23-amino-acid chain: Paralytic peptide 2 (23 aa).

The cysteines at positions 7 and 19 are disulfide-linked.

Belongs to the GBP/PSP1/paralytic peptide family. As to expression, hemolymph.

Functionally, causes rapid, rigid paralysis when injected into Lepidopteran larvae. The physiological role may be to reduce hemolymph loss following injury and promote wound healing. This chain is Paralytic peptide 2, found in Spodoptera exigua (Beet armyworm).